We begin with the raw amino-acid sequence, 962 residues long: Cohesin subunit psc3 (962 aa).

The interval 1–72 (MSESVTTGSD…GVNVKRSRRN (72 aa)) is disordered. Positions 21-30 (VMLSQSFDPM) are enriched in polar residues. Residues 51–71 (SSKKRHPRPNSKGVNVKRSRR) are compositionally biased toward basic residues. The stretch at 236-275 (LCEKSKELLNEHAIATKQLEKEEKRSRVNRNRINELNNSL) forms a coiled coil. Positions 297–382 (FVHRYRDVEP…SRFKERILEM (86 aa)) constitute an SCD domain.

This sequence belongs to the SCC3 family. In terms of assembly, cohesin complexes are composed of the psm1/smc1 and psm3/smc3 heterodimer attached via their hinge domain, rad21/scc1 which link them, and psc3/scc3, which interacts with rad21. Interacts with swi6. The interaction with swi6 may contribute to recruit cohesin complex to heterochromatin.

The protein localises to the nucleus. It localises to the chromosome. It is found in the centromere. Its function is as follows. Component of cohesin complex, a complex required for the cohesion of sister chromatids after DNA replication. The cohesin complex apparently forms a large proteinaceous ring within which sister chromatids can be trapped. At anaphase, the rad21 subunit of the cohesin complex is cleaved and dissociates from chromatin, allowing sister chromatids to segregate. The cohesin complex may also play a role in spindle pole assembly during mitosis. This is Cohesin subunit psc3 (psc3) from Schizosaccharomyces pombe (strain 972 / ATCC 24843) (Fission yeast).